Reading from the N-terminus, the 354-residue chain is NADH-quinone oxidoreductase subunit H (354 aa).

Transmembrane regions (helical) follow at residues 25–45 (LVRI…LILW), 91–111 (WLYL…WAVI), 126–146 (LLYA…AGWA), 170–190 (MGFA…SEIV), 205–225 (FLSW…ISGI), 253–273 (MAFA…SALA), 290–310 (FIPG…VFIW), and 330–350 (VFLP…MSPL).

Belongs to the complex I subunit 1 family. In terms of assembly, NDH-1 is composed of 14 different subunits. Subunits NuoA, H, J, K, L, M, N constitute the membrane sector of the complex.

Its subcellular location is the cell inner membrane. It carries out the reaction a quinone + NADH + 5 H(+)(in) = a quinol + NAD(+) + 4 H(+)(out). Functionally, NDH-1 shuttles electrons from NADH, via FMN and iron-sulfur (Fe-S) centers, to quinones in the respiratory chain. The immediate electron acceptor for the enzyme in this species is believed to be ubiquinone. Couples the redox reaction to proton translocation (for every two electrons transferred, four hydrogen ions are translocated across the cytoplasmic membrane), and thus conserves the redox energy in a proton gradient. This subunit may bind ubiquinone. This Burkholderia thailandensis (strain ATCC 700388 / DSM 13276 / CCUG 48851 / CIP 106301 / E264) protein is NADH-quinone oxidoreductase subunit H.